The sequence spans 368 residues: N-succinylamino acid racemase (368 aa).

2-succinylbenzoate is bound by residues Ser-135 and 161 to 163 (KLK). Lys-163 (proton donor) is an active-site residue. Asp-189 is a Mg(2+) binding site. A 2-succinylbenzoate-binding site is contributed by Asn-191. 2 residues coordinate Mg(2+): Glu-214 and Asp-239. The active-site Proton acceptor is the Lys-263. A 2-succinylbenzoate-binding site is contributed by Ile-293.

The protein belongs to the mandelate racemase/muconate lactonizing enzyme family. MenC type 2 subfamily. As to quaternary structure, homooctamer. Requires a divalent metal cation as cofactor.

It catalyses the reaction N-acetyl-D-methionine = N-acetyl-L-methionine. The enzyme catalyses (1R,6R)-6-hydroxy-2-succinyl-cyclohexa-2,4-diene-1-carboxylate = 2-succinylbenzoate + H2O. Inhibited by EDTA and sulfhydryl reagents such as p-chloromercuribenzoic acid. Both OSBS and NAAAR activities are inhibited competitively by salicylhydroxamate. Acts as a N-succinylamino acid racemase (NSAR) that catalyzes the racemization of N-succinyl-phenylglycine and N-succinyl-methionine. Can catalyze the racemization of a broad range of N-acylamino acids, including N-acetyl-D/L-methionine, N-propionyl-D/L-methionine, N-butyryl-D/L-methionine and N-chloroacetyl-L-valine. Also converts 2-succinyl-6-hydroxy-2,4-cyclohexadiene-1-carboxylate (SHCHC) to 2-succinylbenzoate (OSB). Catalyzes both N-succinylamino acid racemization and OSB synthesis at equivalent rates. NSAR is probably the biological function of this enzyme. This Amycolatopsis sp protein is N-succinylamino acid racemase.